Reading from the N-terminus, the 987-residue chain is Leucine--tRNA ligase (987 aa).

Positions 69–80 (PYPSGKGLHVGH) match the 'HIGH' region motif. The 'KMSKS' region motif lies at 760 to 764 (KMGKS). ATP is bound at residue lysine 763.

The protein belongs to the class-I aminoacyl-tRNA synthetase family.

The protein localises to the cytoplasm. The catalysed reaction is tRNA(Leu) + L-leucine + ATP = L-leucyl-tRNA(Leu) + AMP + diphosphate. The chain is Leucine--tRNA ligase from Bifidobacterium longum (strain NCC 2705).